An 81-amino-acid chain; its full sequence is Antimicrobial peptide Con22 (81 aa).

An N-terminal signal peptide occupies residues 1 to 22 (MNAKVMLVCLLVTMLVMEPAEA). The propeptide occupies 66-81 (EAGQIPFDEFMNVLYS).

Belongs to the non-disulfide-bridged peptide (NDBP) superfamily. Long chain multifunctional peptide (group 2) family. Expressed by the venom gland.

The protein localises to the secreted. It localises to the target cell membrane. Its function is as follows. At high concentrations, acts as a pore former in cellular membranes and causes the leakage of the cells. At submicromolar concentrations, degranulates granulocytes and has a weak hemolytic activity against human erythrocytes. Also strongly inhibits the production of superoxide anions. Has a strong antibacterial activity against Gram-negative bacteria but is less active against Gram-positive bacteria. Also has antifungal activity. The sequence is that of Antimicrobial peptide Con22 from Urodacus yaschenkoi (Inland robust scorpion).